The following is a 198-amino-acid chain: Nucleoid occlusion factor SlmA (198 aa).

Positions 10–70 (NRREEILQSL…SLIEFIEDSL (61 aa)) constitute an HTH tetR-type domain. The segment at residues 33-52 (TTAKLAASVGVSEAALYRHF) is a DNA-binding region (H-T-H motif). The stretch at 117 to 145 (EQDRLQGRINQLFERIEAQLRQVMREKKM) forms a coiled coil.

Belongs to the nucleoid occlusion factor SlmA family. In terms of assembly, homodimer. Interacts with FtsZ.

The protein resides in the cytoplasm. It localises to the nucleoid. In terms of biological role, required for nucleoid occlusion (NO) phenomenon, which prevents Z-ring formation and cell division over the nucleoid. Acts as a DNA-associated cell division inhibitor that binds simultaneously chromosomal DNA and FtsZ, and disrupts the assembly of FtsZ polymers. SlmA-DNA-binding sequences (SBS) are dispersed on non-Ter regions of the chromosome, preventing FtsZ polymerization at these regions. The sequence is that of Nucleoid occlusion factor SlmA from Klebsiella pneumoniae subsp. pneumoniae (strain ATCC 700721 / MGH 78578).